Here is a 379-residue protein sequence, read N- to C-terminus: Forkhead box protein E1 (379 aa).

Polar residues predominate over residues 1-11 (MTAESQQSPTR). The tract at residues 1-65 (MTAESQQSPT…RRRKRPLQKG (65 aa)) is disordered. The span at 54–63 (KGRRRKRPLQ) shows a compositional bias: basic residues. The fork-head DNA-binding region spans 66–160 (KPPYSYIALI…DSGSFLRRRK (95 aa)). The tract at residues 239–265 (HSGSEHAQPPNRSISPEVNSTSSSSCN) is disordered. Positions 251–265 (SISPEVNSTSSSSCN) are enriched in low complexity.

In terms of tissue distribution, first expressed at late neural tube and early tailbud stages in the hypophyseal placode. Expression continues in the developing pituitary at late tailbud stages. As development progresses, expressed in the mesoderm of the branchial arches. At stage 38, expressed in the developing thyroid and in the pharyngeal endoderm.

The protein localises to the nucleus. Transcription factor that binds consensus sites on a variety of gene promoters and activate their transcription. This Xenopus laevis (African clawed frog) protein is Forkhead box protein E1.